An 86-amino-acid chain; its full sequence is Small ribosomal subunit protein uS17 (86 aa).

Belongs to the universal ribosomal protein uS17 family. In terms of assembly, part of the 30S ribosomal subunit.

One of the primary rRNA binding proteins, it binds specifically to the 5'-end of 16S ribosomal RNA. This Desulfotalea psychrophila (strain LSv54 / DSM 12343) protein is Small ribosomal subunit protein uS17.